A 571-amino-acid polypeptide reads, in one-letter code: Polypeptide N-acetylgalactosaminyltransferase 2 (571 aa).

Residues 1-6 (MRRRSR) lie on the Cytoplasmic side of the membrane. A helical; Signal-anchor for type II membrane protein transmembrane segment spans residues 7-24 (MLLCFAFLWVLGIAYYMY). Topologically, residues 25–571 (SGGGSALAGG…QWKFTLNLQQ (547 aa)) are lumenal. Serine 29 is a glycosylation site (O-linked (Xyl...) (chondroitin sulfate) serine). Residues 53 to 66 (KKDLHHSNGEEKAQ) are compositionally biased toward basic and acidic residues. The interval 53–74 (KKDLHHSNGEEKAQSMETLPPG) is disordered. Intrachain disulfides connect cysteine 126-cysteine 354, cysteine 345-cysteine 423, cysteine 456-cysteine 473, and cysteine 496-cysteine 513. A catalytic subdomain A region spans residues 135-240 (LPATSVVITF…EHWLEPLLER (106 aa)). Substrate contacts are provided by threonine 143, aspartate 176, and arginine 201. Residue aspartate 224 participates in Mn(2+) binding. Substrate is bound at residue serine 225. Histidine 226 lines the Mn(2+) pocket. The segment at 300–362 (PIKTPMIAGG…PCSRVGHVFR (63 aa)) is catalytic subdomain B. Residue tryptophan 331 participates in substrate binding. Residue histidine 359 coordinates Mn(2+). The substrate site is built by arginine 362, histidine 365, and tyrosine 367. The region spanning 443–566 (QDIAFGALQQ…PALSQQWKFT (124 aa)) is the Ricin B-type lectin domain. Serine 536 carries the phosphoserine modification. Cysteines 539 and 555 form a disulfide.

Belongs to the glycosyltransferase 2 family. GalNAc-T subfamily. Mn(2+) serves as cofactor. Detected in urine (at protein level). Widely expressed.

Its subcellular location is the golgi apparatus. It localises to the golgi stack membrane. It is found in the secreted. It catalyses the reaction L-seryl-[protein] + UDP-N-acetyl-alpha-D-galactosamine = a 3-O-[N-acetyl-alpha-D-galactosaminyl]-L-seryl-[protein] + UDP + H(+). It carries out the reaction L-threonyl-[protein] + UDP-N-acetyl-alpha-D-galactosamine = a 3-O-[N-acetyl-alpha-D-galactosaminyl]-L-threonyl-[protein] + UDP + H(+). It participates in protein modification; protein glycosylation. In terms of biological role, catalyzes the initial reaction in O-linked oligosaccharide biosynthesis, the transfer of an N-acetyl-D-galactosamine residue to a serine or threonine residue on the protein receptor. Has a broad spectrum of substrates for peptides such as EA2, Muc5AC, Muc1a, Muc1b. Probably involved in O-linked glycosylation of the immunoglobulin A1 (IgA1) hinge region. Involved in O-linked glycosylation of APOC-III, ANGPTL3 and PLTP. It participates in the regulation of HDL-C metabolism. This chain is Polypeptide N-acetylgalactosaminyltransferase 2 (GALNT2), found in Homo sapiens (Human).